The following is a 388-amino-acid chain: Succinate--CoA ligase [ADP-forming] subunit beta (388 aa).

One can recognise an ATP-grasp domain in the interval Lys-9 to Glu-244. ATP contacts are provided by residues Lys-46, Gly-53–Gly-55, Glu-99, Ala-102, and Glu-107. Residues Asn-199 and Asp-213 each contribute to the Mg(2+) site. Substrate-binding positions include Asn-264 and Gly-321–Met-323.

Belongs to the succinate/malate CoA ligase beta subunit family. In terms of assembly, heterotetramer of two alpha and two beta subunits. Mg(2+) serves as cofactor.

The enzyme catalyses succinate + ATP + CoA = succinyl-CoA + ADP + phosphate. It catalyses the reaction GTP + succinate + CoA = succinyl-CoA + GDP + phosphate. Its pathway is carbohydrate metabolism; tricarboxylic acid cycle; succinate from succinyl-CoA (ligase route): step 1/1. In terms of biological role, succinyl-CoA synthetase functions in the citric acid cycle (TCA), coupling the hydrolysis of succinyl-CoA to the synthesis of either ATP or GTP and thus represents the only step of substrate-level phosphorylation in the TCA. The beta subunit provides nucleotide specificity of the enzyme and binds the substrate succinate, while the binding sites for coenzyme A and phosphate are found in the alpha subunit. In Burkholderia thailandensis (strain ATCC 700388 / DSM 13276 / CCUG 48851 / CIP 106301 / E264), this protein is Succinate--CoA ligase [ADP-forming] subunit beta.